The following is a 452-amino-acid chain: Phosphoglucosamine mutase (452 aa).

The Phosphoserine intermediate role is filled by Ser-105. Residues Ser-105, Asp-244, Asp-246, and Asp-248 each coordinate Mg(2+). Residue Ser-105 is modified to Phosphoserine.

Belongs to the phosphohexose mutase family. The cofactor is Mg(2+). Post-translationally, activated by phosphorylation.

It catalyses the reaction alpha-D-glucosamine 1-phosphate = D-glucosamine 6-phosphate. Its function is as follows. Catalyzes the conversion of glucosamine-6-phosphate to glucosamine-1-phosphate. This Blochmanniella floridana protein is Phosphoglucosamine mutase.